Here is a 470-residue protein sequence, read N- to C-terminus: Sperm-associated antigen 8 (470 aa).

The segment covering 1-21 has biased composition (polar residues); the sequence is METTESTEGSLSRSCDVQPSS. 3 disordered regions span residues 1 to 70, 117 to 178, and 302 to 321; these read METT…PPAH, SGTC…GQGP, and LTTQ…DSYQ. Low complexity predominate over residues 27-48; that stretch reads PSEPVPSSSSSPRSTAPAEAPA. The segment covering 51–60 has biased composition (polar residues); it reads SVLTEPSSDS. Composition is skewed to low complexity over residues 122 to 175 and 303 to 316; these read LGQS…ADPG and TTQP…STTQ. Mn stretches follow at residues 312–325 and 364–378; these read SSTT…LPRH and ESVT…LVRA.

This sequence belongs to the SPAG8 family. In terms of assembly, microtubule inner protein component of sperm flagellar doublet microtubules. Interacts with FHL5 (via second LIM domain). Interacts with RANBP9. In terms of tissue distribution, expressed in testis (at protein level). Not detected in brain, heart, kidney, spleen, liver, lung, thymus and colon (at protein level).

The protein localises to the cytoplasm. It is found in the nucleus. Its subcellular location is the cytoplasmic vesicle. The protein resides in the secretory vesicle. It localises to the acrosome. The protein localises to the cytoskeleton. It is found in the microtubule organizing center. Its subcellular location is the spindle. The protein resides in the cilium axoneme. It localises to the flagellum axoneme. Its function is as follows. Microtubule inner protein (MIP) part of the dynein-decorated doublet microtubules (DMTs) in cilia axoneme, which is required for motile cilia beating. Plays a role in spermatogenesis by enhancing the binding of CREM isoform tau to its coactivator FHL5 and increasing the FHL5-regulated transcriptional activation of CREM isoform tau. Involved in the acrosome reaction and in binding of sperm to the zona pellucida. Plays a role in regulation of the cell cycle by controlling progression through the G2/M phase, possibly by delaying the activation of CDK1 which is required for entry into mitosis. May play a role in fertility and microtubule formation through interaction with RANBP9. The sequence is that of Sperm-associated antigen 8 from Mus musculus (Mouse).